The primary structure comprises 159 residues: Ribosomal RNA large subunit methyltransferase H (159 aa).

S-adenosyl-L-methionine is bound by residues Leu-76, Gly-108, and Phe-127–Phe-132.

This sequence belongs to the RNA methyltransferase RlmH family. Homodimer.

It is found in the cytoplasm. The catalysed reaction is pseudouridine(1915) in 23S rRNA + S-adenosyl-L-methionine = N(3)-methylpseudouridine(1915) in 23S rRNA + S-adenosyl-L-homocysteine + H(+). Specifically methylates the pseudouridine at position 1915 (m3Psi1915) in 23S rRNA. This Streptococcus thermophilus (strain ATCC BAA-491 / LMD-9) protein is Ribosomal RNA large subunit methyltransferase H.